A 492-amino-acid chain; its full sequence is Glutamyl-tRNA(Gln) amidotransferase subunit A (492 aa).

Residues K79 and S154 each act as charge relay system in the active site. The active-site Acyl-ester intermediate is S178.

The protein belongs to the amidase family. GatA subfamily. Heterotrimer of A, B and C subunits.

It carries out the reaction L-glutamyl-tRNA(Gln) + L-glutamine + ATP + H2O = L-glutaminyl-tRNA(Gln) + L-glutamate + ADP + phosphate + H(+). Functionally, allows the formation of correctly charged Gln-tRNA(Gln) through the transamidation of misacylated Glu-tRNA(Gln) in organisms which lack glutaminyl-tRNA synthetase. The reaction takes place in the presence of glutamine and ATP through an activated gamma-phospho-Glu-tRNA(Gln). This is Glutamyl-tRNA(Gln) amidotransferase subunit A from Acinetobacter baumannii (strain ACICU).